A 115-amino-acid chain; its full sequence is Holo-[acyl-carrier-protein] synthase (115 aa).

Mg(2+)-binding residues include Asp-6 and Glu-51.

The protein belongs to the P-Pant transferase superfamily. AcpS family. Mg(2+) serves as cofactor.

The protein localises to the cytoplasm. It catalyses the reaction apo-[ACP] + CoA = holo-[ACP] + adenosine 3',5'-bisphosphate + H(+). In terms of biological role, transfers the 4'-phosphopantetheine moiety from coenzyme A to a Ser of acyl-carrier-protein. The protein is Holo-[acyl-carrier-protein] synthase of Campylobacter jejuni subsp. jejuni serotype O:23/36 (strain 81-176).